The sequence spans 134 residues: Profilin-2 (134 aa).

A disulfide bridge connects residues C13 and C118. An Involved in PIP2 interaction motif is present at residues A84–T100. T114 carries the phosphothreonine modification.

This sequence belongs to the profilin family. In terms of assembly, occurs in many kinds of cells as a complex with monomeric actin in a 1:1 ratio. In terms of processing, phosphorylated by MAP kinases.

It is found in the cytoplasm. The protein localises to the cytoskeleton. Its function is as follows. Binds to actin and affects the structure of the cytoskeleton. At high concentrations, profilin prevents the polymerization of actin, whereas it enhances it at low concentrations. The protein is Profilin-2 of Olea europaea (Common olive).